Here is a 270-residue protein sequence, read N- to C-terminus: Putative phosphoenolpyruvate synthase regulatory protein (270 aa).

150–157 (GVSRCGKT) is a binding site for ADP.

This sequence belongs to the pyruvate, phosphate/water dikinase regulatory protein family. PSRP subfamily.

It catalyses the reaction [pyruvate, water dikinase] + ADP = [pyruvate, water dikinase]-phosphate + AMP + H(+). The catalysed reaction is [pyruvate, water dikinase]-phosphate + phosphate + H(+) = [pyruvate, water dikinase] + diphosphate. Functionally, bifunctional serine/threonine kinase and phosphorylase involved in the regulation of the phosphoenolpyruvate synthase (PEPS) by catalyzing its phosphorylation/dephosphorylation. This Shewanella sediminis (strain HAW-EB3) protein is Putative phosphoenolpyruvate synthase regulatory protein.